The sequence spans 342 residues: Protein BASIC PENTACYSTEINE6 (342 aa).

A coiled-coil region spans residues 41 to 67; that stretch reads AIQERNLAISEKKAAVAERDMAFLQRD. Residues 41-76 form an alanine-zipper region; that stretch reads AIQERNLAISEKKAAVAERDMAFLQRDTAIAERNNA. The tract at residues 143–199 is disordered; sequence REMEPNDGLPTSPPAGSTLESAKPKRGKRVNPKATTQTAANKRGPKNQRKVKKESED. Residues 164–195 form a required for nucleus and nucleolus localization region; sequence AKPKRGKRVNPKATTQTAANKRGPKNQRKVKK. Over residues 185–194 the composition is skewed to basic residues; the sequence is RGPKNQRKVK. The short motif at 192–195 is the Nuclear localization signal element; that stretch reads KVKK.

It belongs to the BBR/BPC family. As to quaternary structure, homodimer. Heterodimer with BPC4. In terms of tissue distribution, expressed in seedlings, leaves and pistils. Detected in the base of flowers and tips of carpels, in sepal vasculature, in young rosette, in the lateral and tip of primary roots, and in ovule at the exception of the outer integument.

The protein localises to the nucleus. It localises to the nucleolus. Functionally, transcriptional regulator that specifically binds to GA-rich elements (GAGA-repeats) present in regulatory sequences of genes involved in developmental processes. The polypeptide is Protein BASIC PENTACYSTEINE6 (BPC6) (Arabidopsis thaliana (Mouse-ear cress)).